The chain runs to 154 residues: Protein E6 (154 aa).

2 zinc fingers span residues 34-70 and 107-143; these read CVFC…CKFC and CYRC…CLTC.

The protein belongs to the papillomaviridae E6 protein family. Forms homodimers. Interacts with ubiquitin-protein ligase UBE3A/E6-AP; this interaction stimulates UBE3A ubiquitin activity. Interacts with host TP53 and EP300; this interaction inhibits TP53 activity.

The protein localises to the host cytoplasm. Its subcellular location is the host nucleus. Functionally, plays a major role in the induction and maintenance of cellular transformation. E6 associates with host UBE3A/E6-AP ubiquitin-protein ligase and modulates its activity. Sequesters tumor suppressor TP53 in the host cytoplasm and modulates its activity by interacting with host EP300 that results in the reduction of TP53 acetylation and activation. In turn, apoptosis induced by DNA damage is inhibited. E6 also protects host keratinocytes from apoptosis by mediating the degradation of host BAK1. May also inhibit host immune response. The chain is Protein E6 from Human papillomavirus type 53.